The following is a 535-amino-acid chain: MTKYIFVTGGVVSSLGKGITAASLGRLLKNRGLNVTIQKFDPYINVDPGTMSPYQHGEVFVTDDGAETDLDLGHYERFIDINLNKYSNVTTGKIYSSVLQKERRGEYLGGTVQVIPHITNEIKERVYRSGRETNADVVITEIGGTVGDIESLPFLEAIRQIKSDIGRDNVMYIHCTLIPYLKAAGEMKTKPTQHSVKELRSLGIQPNIIVVRTEMPVSQDMKDKLALFCDIDTKAVIEARDADTLYAVPLSLQEQNMDQIVCDHLKLDNPAADMTEWTALVEKVRNLSKKTKIALVGKYVELQDAYISVVEALRHAGYSFDTDVEVKWVNAEHVTAENVQELVGDTDGILVPGGFGDRGVEGKIVAIQYARENKVPFLGICLGMQLASIEFARNVLGLEGANSSEINPDTPYAIIDLLPEQKDVEDLGGTLRLGLYPCKLSEETNAYNAYNEPVVYERHRHRYEFNNQFRPDMEKAGFVFSGTSPDGRLVEIIELKDHPWFVAAQFHPELVSRPNRPQPLFHDFVRASITNKESK.

The tract at residues 1–267 (MTKYIFVTGG…DQIVCDHLKL (267 aa)) is amidoligase domain. Serine 13 contributes to the CTP binding site. Serine 13 contributes to the UTP binding site. 14–19 (SLGKGI) lines the ATP pocket. Residue tyrosine 54 participates in L-glutamine binding. Aspartate 71 lines the ATP pocket. Aspartate 71 and glutamate 141 together coordinate Mg(2+). CTP is bound by residues 148–150 (DIE), 188–193 (KTKPTQ), and lysine 224. UTP contacts are provided by residues 188 to 193 (KTKPTQ) and lysine 224. 240-242 (RDA) is a binding site for ATP. Residues 292 to 534 (KIALVGKYVE…VRASITNKES (243 aa)) form the Glutamine amidotransferase type-1 domain. Position 354 (glycine 354) interacts with L-glutamine. Cysteine 381 (nucleophile; for glutamine hydrolysis) is an active-site residue. Residues 382-385 (LGMQ), glutamate 405, and arginine 462 each bind L-glutamine. Active-site residues include histidine 507 and glutamate 509.

The protein belongs to the CTP synthase family. As to quaternary structure, homotetramer.

The enzyme catalyses UTP + L-glutamine + ATP + H2O = CTP + L-glutamate + ADP + phosphate + 2 H(+). The catalysed reaction is L-glutamine + H2O = L-glutamate + NH4(+). It catalyses the reaction UTP + NH4(+) + ATP = CTP + ADP + phosphate + 2 H(+). It functions in the pathway pyrimidine metabolism; CTP biosynthesis via de novo pathway; CTP from UDP: step 2/2. Its activity is regulated as follows. Allosterically activated by GTP, when glutamine is the substrate; GTP has no effect on the reaction when ammonia is the substrate. The allosteric effector GTP functions by stabilizing the protein conformation that binds the tetrahedral intermediate(s) formed during glutamine hydrolysis. Inhibited by the product CTP, via allosteric rather than competitive inhibition. Its function is as follows. Catalyzes the ATP-dependent amination of UTP to CTP with either L-glutamine or ammonia as the source of nitrogen. Regulates intracellular CTP levels through interactions with the four ribonucleotide triphosphates. In Bacillus cereus (strain AH820), this protein is CTP synthase.